Consider the following 360-residue polypeptide: uncharacterized protein (360 aa).

6 consecutive transmembrane segments (helical) span residues 12 to 32 (ILPLLIIVTFSVTSIVWITQI), 52 to 72 (VVLVLPTLLFILLPIITVIAV), 96 to 116 (IQLALPALYVALTIMLLAYYI), 278 to 298 (IIWPLYNFVLPCLALAVFLRY), 306 to 326 (FMPVLFSALTVLFVTAIHFIL), and 336 to 356 (FIFACYFNLLVALTIGLYLLV).

It is found in the cell membrane. This is an uncharacterized protein from Rickettsia prowazekii (strain Madrid E).